A 142-amino-acid polypeptide reads, in one-letter code: Large ribosomal subunit protein uL13 (142 aa).

Belongs to the universal ribosomal protein uL13 family. As to quaternary structure, part of the 50S ribosomal subunit.

This protein is one of the early assembly proteins of the 50S ribosomal subunit, although it is not seen to bind rRNA by itself. It is important during the early stages of 50S assembly. The polypeptide is Large ribosomal subunit protein uL13 (Edwardsiella ictaluri (strain 93-146)).